The following is a 56-amino-acid chain: Large ribosomal subunit protein bL32 (56 aa).

Residues 1–34 (MAVQQNKKSRSKRGMRRSHDSLSTAQLSVDATSG) form a disordered region. A compositionally biased stretch (basic residues) spans 7–16 (KKSRSKRGMR). Positions 21-31 (SLSTAQLSVDA) are enriched in polar residues.

This sequence belongs to the bacterial ribosomal protein bL32 family.

This chain is Large ribosomal subunit protein bL32, found in Shewanella frigidimarina (strain NCIMB 400).